A 103-amino-acid chain; its full sequence is MYAVVKTGGKQYKVAAGEKLKVEQIPADIGAEITLDQVLAVGAGDQIKFGTPLVSGASVKATVIAQGRHDKVKIFKMRRRKHYQKRQGHRQNYTELRIEAIVA.

The protein belongs to the bacterial ribosomal protein bL21 family. In terms of assembly, part of the 50S ribosomal subunit. Contacts protein L20.

Its function is as follows. This protein binds to 23S rRNA in the presence of protein L20. This is Large ribosomal subunit protein bL21 from Cupriavidus metallidurans (strain ATCC 43123 / DSM 2839 / NBRC 102507 / CH34) (Ralstonia metallidurans).